Here is a 251-residue protein sequence, read N- to C-terminus: Triosephosphate isomerase 1 (251 aa).

9-11 (NWK) serves as a coordination point for substrate. Residue H95 is the Electrophile of the active site. E167 (proton acceptor) is an active-site residue. Substrate is bound by residues G173, S213, and 234–235 (GG).

It belongs to the triosephosphate isomerase family. As to quaternary structure, homodimer.

It is found in the cytoplasm. It carries out the reaction D-glyceraldehyde 3-phosphate = dihydroxyacetone phosphate. It functions in the pathway carbohydrate biosynthesis; gluconeogenesis. It participates in carbohydrate degradation; glycolysis; D-glyceraldehyde 3-phosphate from glycerone phosphate: step 1/1. Functionally, involved in the gluconeogenesis. Catalyzes stereospecifically the conversion of dihydroxyacetone phosphate (DHAP) to D-glyceraldehyde-3-phosphate (G3P). The sequence is that of Triosephosphate isomerase 1 from Listeria innocua serovar 6a (strain ATCC BAA-680 / CLIP 11262).